The following is a 396-amino-acid chain: Pectinesterase (396 aa).

The signal sequence occupies residues 1–21 (MQSKTLYLKATALLGGCTVFA). Position 174 (Thr174) interacts with substrate. The Proton donor role is filled by Asp232. The active-site Nucleophile is Asp259. Substrate is bound by residues Arg324 and Trp326.

Belongs to the pectinesterase family.

It is found in the secreted. It catalyses the reaction [(1-&gt;4)-alpha-D-galacturonosyl methyl ester](n) + n H2O = [(1-&gt;4)-alpha-D-galacturonosyl](n) + n methanol + n H(+). The protein operates within glycan metabolism; pectin degradation; 2-dehydro-3-deoxy-D-gluconate from pectin: step 1/5. In terms of biological role, involved in maceration and soft-rotting of plant tissue. The protein is Pectinesterase (pme) of Ralstonia nicotianae (strain ATCC BAA-1114 / GMI1000) (Ralstonia solanacearum).